The following is a 106-amino-acid chain: ATP-dependent Clp protease adapter protein ClpS (106 aa).

Belongs to the ClpS family. In terms of assembly, binds to the N-terminal domain of the chaperone ClpA.

Involved in the modulation of the specificity of the ClpAP-mediated ATP-dependent protein degradation. This Salmonella agona (strain SL483) protein is ATP-dependent Clp protease adapter protein ClpS.